Here is a 190-residue protein sequence, read N- to C-terminus: Probable molybdenum cofactor guanylyltransferase (190 aa).

Residues 9–11, Lys-21, Asp-65, and Asp-94 contribute to the GTP site; that span reads LCG. Asp-94 contacts Mg(2+).

It belongs to the MobA family. It depends on Mg(2+) as a cofactor.

Its subcellular location is the cytoplasm. It carries out the reaction Mo-molybdopterin + GTP + H(+) = Mo-molybdopterin guanine dinucleotide + diphosphate. In terms of biological role, transfers a GMP moiety from GTP to Mo-molybdopterin (Mo-MPT) cofactor (Moco or molybdenum cofactor) to form Mo-molybdopterin guanine dinucleotide (Mo-MGD) cofactor. The protein is Probable molybdenum cofactor guanylyltransferase of Flavobacterium johnsoniae (strain ATCC 17061 / DSM 2064 / JCM 8514 / BCRC 14874 / CCUG 350202 / NBRC 14942 / NCIMB 11054 / UW101) (Cytophaga johnsonae).